The chain runs to 496 residues: Probable cytosol aminopeptidase (496 aa).

The Mn(2+) site is built by Lys-261 and Asp-266. The active site involves Lys-273. Residues Asp-284, Asp-343, and Glu-345 each contribute to the Mn(2+) site. Arg-347 is a catalytic residue.

The protein belongs to the peptidase M17 family. Mn(2+) serves as cofactor.

It is found in the cytoplasm. The catalysed reaction is Release of an N-terminal amino acid, Xaa-|-Yaa-, in which Xaa is preferably Leu, but may be other amino acids including Pro although not Arg or Lys, and Yaa may be Pro. Amino acid amides and methyl esters are also readily hydrolyzed, but rates on arylamides are exceedingly low.. It carries out the reaction Release of an N-terminal amino acid, preferentially leucine, but not glutamic or aspartic acids.. Its function is as follows. Presumably involved in the processing and regular turnover of intracellular proteins. Catalyzes the removal of unsubstituted N-terminal amino acids from various peptides. In Bacillus pumilus (strain SAFR-032), this protein is Probable cytosol aminopeptidase.